The following is a 336-amino-acid chain: Large ribosomal subunit protein uL1 (336 aa).

Residues 1-245 (MANQKKVTNK…VKKTAKGKVI (245 aa)) form a large ribosomal subunit protein uL1 region. The segment at 246 to 336 (ADDSAKGENK…DVKKAKTSKK (91 aa)) is unknown. The segment at 267 to 336 (AQKKKPSKHP…DVKKAKTSKK (70 aa)) is disordered. Basic residues predominate over residues 286–305 (KKKKVKKILKKAKPAKKAAV). Low complexity predominate over residues 306–315 (AKKPVVVNKK).

The protein belongs to the universal ribosomal protein uL1 family. In terms of assembly, part of the 50S ribosomal subunit.

Functionally, binds directly to 23S rRNA. The L1 stalk is quite mobile in the ribosome, and is involved in E site tRNA release. In terms of biological role, protein L1 is also a translational repressor protein, it controls the translation of the L11 operon by binding to its mRNA. The polypeptide is Large ribosomal subunit protein uL1 (Malacoplasma penetrans (strain HF-2) (Mycoplasma penetrans)).